The primary structure comprises 235 residues: 2-C-methyl-D-erythritol 4-phosphate cytidylyltransferase (235 aa).

The protein belongs to the IspD/TarI cytidylyltransferase family. IspD subfamily.

It catalyses the reaction 2-C-methyl-D-erythritol 4-phosphate + CTP + H(+) = 4-CDP-2-C-methyl-D-erythritol + diphosphate. The protein operates within isoprenoid biosynthesis; isopentenyl diphosphate biosynthesis via DXP pathway; isopentenyl diphosphate from 1-deoxy-D-xylulose 5-phosphate: step 2/6. Functionally, catalyzes the formation of 4-diphosphocytidyl-2-C-methyl-D-erythritol from CTP and 2-C-methyl-D-erythritol 4-phosphate (MEP). This chain is 2-C-methyl-D-erythritol 4-phosphate cytidylyltransferase, found in Pseudomonas putida (strain GB-1).